The chain runs to 275 residues: Probable 2' cyclic ADP-D-ribose synthase TcpB (275 aa).

Basic and acidic residues predominate over residues 17 to 32 (RLKADDSREMSKEKQA). The segment at 17–66 (RLKADDSREMSKEKQAQSKAHKAQQAISSAKSLSTQKSKMSELERATRDG) is disordered. The span at 39–48 (AQQAISSAKS) shows a compositional bias: low complexity. The span at 55-64 (KMSELERATR) shows a compositional bias: basic and acidic residues. The region spanning 142–275 (EEYDFFISHA…EIAKELHSLI (134 aa)) is the TIR domain. NAD(+) contacts are provided by residues 151–152 (AS) and lysine 181. Glutamate 217 is a catalytic residue.

In terms of assembly, homodimer. Interacts with host TIRAP, and probably host MYD88. Interacts with host TLR4, abolishes the interaction of host TIRAP with TLR4.

The protein localises to the secreted. Its subcellular location is the host cell membrane. The catalysed reaction is NAD(+) + H2O = ADP-D-ribose + nicotinamide + H(+). The enzyme catalyses NAD(+) = 2'cADPR + nicotinamide + H(+). Virulence factor that interferes with host Toll-like receptor 2 (TLR2) and TLR4 signaling, resulting in the reduction of dendritic cell maturation, inhibition of pro-inflammatory cytokine secretion and impaired NF-kappa-B activation in macrophages. Binds host lipids. Has NAD(+) hydrolase (NADase) activity, catalyzes cleavage of NAD(+) into ADP-D-ribose (ADPR) and nicotinamide, also generates a cyclization variant of cyclic ADPR (cADPR), termed v-cADPR (probably 2'cADPR). This Brucella melitensis biotype 2 (strain ATCC 23457) protein is Probable 2' cyclic ADP-D-ribose synthase TcpB (tcpB).